The sequence spans 179 residues: Peptide deformylase (179 aa).

Residues cysteine 102 and histidine 144 each contribute to the Fe cation site. The active site involves glutamate 145. Residue histidine 148 participates in Fe cation binding.

Belongs to the polypeptide deformylase family. The cofactor is Fe(2+).

It carries out the reaction N-terminal N-formyl-L-methionyl-[peptide] + H2O = N-terminal L-methionyl-[peptide] + formate. In terms of biological role, removes the formyl group from the N-terminal Met of newly synthesized proteins. Requires at least a dipeptide for an efficient rate of reaction. N-terminal L-methionine is a prerequisite for activity but the enzyme has broad specificity at other positions. This is Peptide deformylase from Wolbachia pipientis subsp. Culex pipiens (strain wPip).